Reading from the N-terminus, the 366-residue chain is Probable quinol oxidase subunit 2 (366 aa).

The signal sequence occupies residues 1-19 (MSKFKSLLLLFGTLILLSG). Cys20 is lipidated: N-palmitoyl cysteine. A lipid anchor (S-diacylglycerol cysteine) is attached at Cys20. The next 2 membrane-spanning stretches (helical) occupy residues 38 to 58 (FLIL…LGMF) and 80 to 100 (AIIE…LAIP). The interval 330-366 (EPYNNEFKKDESKNAKEMKKISKDAQDQDNDDHGGGH) is disordered. The span at 335-366 (EFKKDESKNAKEMKKISKDAQDQDNDDHGGGH) shows a compositional bias: basic and acidic residues.

It belongs to the cytochrome c oxidase subunit 2 family.

Its subcellular location is the cell membrane. It catalyses the reaction 2 a quinol + O2 = 2 a quinone + 2 H2O. Functionally, catalyzes quinol oxidation with the concomitant reduction of oxygen to water. Subunit II transfers the electrons from a quinol to the binuclear center of the catalytic subunit I. This Staphylococcus aureus (strain USA300) protein is Probable quinol oxidase subunit 2 (qoxA).